The sequence spans 353 residues: Alternative oxidase, mitochondrial (353 aa).

Positions 25-45 are disordered; it reads FRSTDDEDENNPSTELATDTT. A compositionally biased stretch (polar residues) spans 35–45; that stretch reads NPSTELATDTT. A helical transmembrane segment spans residues 153-173; sequence FLFLESIAGVPGMVAGMIRHL. 3 residues coordinate Fe cation: Glu-157, Glu-196, and His-199. The chain crosses the membrane as a helical span at residues 217–237; the sequence is LLIGQIIFYNLFFISYLISPA. The Fe cation site is built by Glu-247, Glu-301, and His-304.

The protein belongs to the alternative oxidase family. Fe cation serves as cofactor.

Its subcellular location is the mitochondrion inner membrane. Functionally, catalyzes cyanide-resistant oxygen consumption. May increase respiration when the cytochrome respiratory pathway is restricted, or in response to low temperatures. The chain is Alternative oxidase, mitochondrial (AOX) from Yarrowia lipolytica (strain CLIB 122 / E 150) (Yeast).